A 906-amino-acid polypeptide reads, in one-letter code: Pre-mRNA-splicing factor prp1 (906 aa).

2 disordered regions span residues Ile-50 to Gln-129 and Asp-142 to Arg-164. The segment covering Arg-108–Pro-124 has biased composition (basic and acidic residues). At Ser-235 the chain carries Phosphoserine. HAT repeat units lie at residues Gly-258–Val-290, His-322–Asn-353, Gln-354–Glu-384, Glu-385–Tyr-416, Lys-524–Leu-556, Gly-558–Asn-590, Asn-592–Val-624, Glu-693–Lys-725, Gln-726–Arg-758, Gly-760–Arg-792, and Lys-824–Glu-856.

In terms of assembly, interacts with brr2 and spp42.

The protein resides in the nucleus. Its function is as follows. Involved in pre-mRNA splicing. Interacts with prp6 and prp13. May also be involved in the regulation of the G0-G1/G2 transition. Required for pre-spliceosome formation, which is the first step of pre-mRNA splicing. This protein is associated with snRNP U5. Has a role in branch site-3' splice site selection. Associates with the branch site-3' splice 3'-exon region. The sequence is that of Pre-mRNA-splicing factor prp1 (prp1) from Schizosaccharomyces pombe (strain 972 / ATCC 24843) (Fission yeast).